The chain runs to 1062 residues: Inactive tyrosine-protein kinase 7 (1062 aa).

A signal peptide spans 1–22 (MGARPLTLLRALLLPLLAGAQA). Ig-like C2-type domains follow at residues 23–112 (AIVF…ASFN), 120–210 (PVVL…FTLS), 217–309 (ARVV…EATL), 301–399 (PPIV…VNIT), 404–489 (PTWL…ARVQ), 495–578 (KFTP…HVQL), and 570–672 (GQIR…APLL). The Extracellular portion of the chain corresponds to 23 to 696 (AIVFIKEPSS…SPPPYKMIQT (674 aa)). C45 and C93 form a disulfide bridge. 6 N-linked (GlcNAc...) asparagine glycosylation sites follow: N98, N108, N176, N206, N260, and N275. Cysteines 142 and 192 form a disulfide. 2 disulfides stabilise this stretch: C238-C293 and C335-C383. 4 N-linked (GlcNAc...) asparagine glycosylation sites follow: N397, N455, N559, and N638. Cystine bridges form between C425–C473, C516–C562, and C605–C656. The helical transmembrane segment at 697–717 (IGLSVGAAVAYIIAVLGLMFY) threads the bilayer. At 718 to 1062 (CKKRCKAKRL…LGDSPADSKQ (345 aa)) the chain is on the cytoplasmic side. 2 disordered regions span residues 728-750 (QKQP…QNGQ) and 1039-1062 (NPKD…DSKQ). The tract at residues 786–1062 (ASLQPITTLG…LGDSPADSKQ (277 aa)) is interaction with CTNNB1. One can recognise a Protein kinase; inactive domain in the interval 788-1058 (LQPITTLGKS…IASTLGDSPA (271 aa)). At S1056 the chain carries Phosphoserine.

It belongs to the protein kinase superfamily. Tyr protein kinase family. Insulin receptor subfamily. In terms of assembly, interacts with CTNNB1. In terms of processing, MMP14 cleaves PTK7 between Pro-613 and Leu-614 generating an N-terminal soluble (70 kDa) fragment and a membrane C-terminal (50 kDa) fragment. Proteolysis by MMP14 regulates PTK7 function in non-canonical Wnt signaling pathway. Expressed at high levels in lung and un-pregnant uterus among adult tissues, and in the tail, limbs, somites, gut and craniofacial regions among embryonic tissues.

It localises to the membrane. Its subcellular location is the cell junction. Its function is as follows. Inactive tyrosine kinase involved in Wnt signaling pathway. Component of both the non-canonical (also known as the Wnt/planar cell polarity signaling) and the canonical Wnt signaling pathway. Functions in cell adhesion, cell migration, cell polarity, proliferation, actin cytoskeleton reorganization and apoptosis. Has a role in embryogenesis, epithelial tissue organization and angiogenesis. This Mus musculus (Mouse) protein is Inactive tyrosine-protein kinase 7 (Ptk7).